Consider the following 952-residue polypeptide: ALS2 C-terminal-like protein (952 aa).

8 MORN repeats span residues Tyr-358–Asn-380, His-381–Glu-403, Tyr-409–Val-431, Tyr-432–Pro-454, Tyr-459–Glu-481, Tyr-483–Cys-505, Tyr-506–Leu-528, and Tyr-529–Thr-552. Positions Leu-795–His-941 constitute a VPS9 domain.

Homodimer. Forms a heteromeric complex with ALS2. Interacts with ALS2 and RAB5A. As to expression, expressed in heart, lung, liver and kidney.

The protein resides in the cytoplasm. Functionally, acts as a guanine nucleotide exchange factor (GEF) for Rab5 GTPase. Regulates the ALS2-mediated endosome dynamics. In Mus musculus (Mouse), this protein is ALS2 C-terminal-like protein (Als2cl).